Reading from the N-terminus, the 673-residue chain is Annexin A6 (673 aa).

An N-acetylalanine modification is found at Ala-2. Position 13 is a phosphoserine (Ser-13). Annexin repeat units lie at residues 20–91 (FDAN…NLMR), 92–163 (PLAY…VLLQ), 175–247 (DLVQ…AVVK), 251–322 (STPE…KLCG), 363–434 (FNPD…GLMM), 435–506 (PPAH…SLAT), 521–595 (EDAQ…AIVQ), and 599–670 (NKPL…ALCG). Tyr-30 carries the phosphotyrosine modification. Residues Lys-63, Lys-68, Lys-75, and Lys-81 each carry the N6-acetyllysine modification. Tyr-201 bears the Phosphotyrosine mark. An N6-acetyllysine mark is found at Lys-306, Lys-370, and Lys-418. At Ser-422 the chain carries Phosphoserine. At Lys-483 the chain carries N6-acetyllysine. A Phosphoserine modification is found at Ser-537. Lys-620 is modified (N6-acetyllysine).

Belongs to the annexin family.

It localises to the cytoplasm. It is found in the melanosome. Functionally, may associate with CD21. May regulate the release of Ca(2+) from intracellular stores. The protein is Annexin A6 (Anxa6) of Rattus norvegicus (Rat).